Reading from the N-terminus, the 693-residue chain is Endoprotease bli (693 aa).

Positions 1-20 are cleaved as a signal peptide; the sequence is MYWQLVRILVLFDCLQKILA. The propeptide at 21 to 116 is inhibition peptide; it reads IEHDSICIAD…EQRPRVRRKR (96 aa). Asp161 is a Ca(2+) binding site. Residues 167–482 form the Peptidase S8 domain; it reads QWYLNNGAQG…YGLMDAGALV (316 aa). N-linked (GlcNAc...) asparagine glycosylation occurs at Asn194. The active-site Charge relay system is the Asp201. Substrate is bound at residue Asp202. Asp210, Asp222, Asp227, and Asp229 together coordinate Ca(2+). The tract at residues 215–242 is disordered; it reads YDPLASTDINGHDDDPTPQDDGDNKHGT. Position 237–238 (237–238) interacts with substrate; the sequence is DN. Residue His240 is the Charge relay system of the active site. Ca(2+)-binding residues include Ile251, Asn254, Tyr256, and Gly258. Cystine bridges form between Cys257–Cys406 and Cys349–Cys379. Residues Glu282, 299-304, Asp310, and 338-341 each bind substrate; these read SWGPED and ASGN. Asp304 contributes to the Ca(2+) binding site. Ca(2+) is bound at residue Asp347. Substrate contacts are provided by Asp352 and Tyr354. Glu377 is a Ca(2+) binding site. Catalysis depends on Ser414, which acts as the Charge relay system. Ser414 is a substrate binding site. 2 N-linked (GlcNAc...) asparagine glycosylation sites follow: Asn433 and Asn518. The P/Homo B domain occupies 490 to 628; sequence TVPEQHICTY…SLLLYGTAEP (139 aa). Cys497 and Cys526 form a disulfide bridge. The interval 629–693 is disordered; it reads AQPNDPRHSS…LVSAQPELRV (65 aa). Residues 668 to 681 show a composition bias toward basic and acidic residues; that stretch reads DSRDWQPKKVENKK.

It belongs to the peptidase S8 family. Furin subfamily. Requires Ca(2+) as cofactor. N-glycosylated. Post-translationally, the inhibition peptide, which plays the role of an intramolecular chaperone, is probably autocatalytically removed in the endoplasmic reticulum (ER) and remains non-covalently bound as a potent autoinhibitor. Probably following transport to the trans Golgi, a second cleavage within the inhibition propeptide results in propeptide dissociation and bli activation.

Its subcellular location is the secreted. The catalysed reaction is Release of mature proteins from their proproteins by cleavage of -Arg-Xaa-Yaa-Arg-|-Zaa- bonds, where Xaa can be any amino acid and Yaa is Arg or Lys. Releases albumin, complement component C3 and von Willebrand factor from their respective precursors.. With respect to regulation, inhibited by the propeptide before the second cleavage. Inhibited by ethylenediaminetetraacetic acid (EDTA), ZnSO(4) and chloroketone DEC-RVKR-CMK. Its function is as follows. Serine endoprotease which cleaves substrates at the RX(K/R)R consensus motif. In Onchocerca volvulus, this protein is Endoprotease bli.